We begin with the raw amino-acid sequence, 175 residues long: SsrA-binding protein (175 aa).

It belongs to the SmpB family.

It is found in the cytoplasm. Its function is as follows. Required for rescue of stalled ribosomes mediated by trans-translation. Binds to transfer-messenger RNA (tmRNA), required for stable association of tmRNA with ribosomes. tmRNA and SmpB together mimic tRNA shape, replacing the anticodon stem-loop with SmpB. tmRNA is encoded by the ssrA gene; the 2 termini fold to resemble tRNA(Ala) and it encodes a 'tag peptide', a short internal open reading frame. During trans-translation Ala-aminoacylated tmRNA acts like a tRNA, entering the A-site of stalled ribosomes, displacing the stalled mRNA. The ribosome then switches to translate the ORF on the tmRNA; the nascent peptide is terminated with the 'tag peptide' encoded by the tmRNA and targeted for degradation. The ribosome is freed to recommence translation, which seems to be the essential function of trans-translation. The sequence is that of SsrA-binding protein from Prochlorococcus marinus subsp. pastoris (strain CCMP1986 / NIES-2087 / MED4).